Reading from the N-terminus, the 116-residue chain is Large ribosomal subunit protein bL19 (116 aa).

The protein belongs to the bacterial ribosomal protein bL19 family.

This protein is located at the 30S-50S ribosomal subunit interface and may play a role in the structure and function of the aminoacyl-tRNA binding site. This is Large ribosomal subunit protein bL19 from Stutzerimonas stutzeri (strain A1501) (Pseudomonas stutzeri).